A 373-amino-acid chain; its full sequence is Alcohol dehydrogenase class-3 (373 aa).

Alanine 1 carries the N-acetylalanine modification. Cysteine 44, histidine 66, cysteine 96, cysteine 99, cysteine 102, cysteine 110, and cysteine 173 together coordinate Zn(2+).

Belongs to the zinc-containing alcohol dehydrogenase family. Class-III subfamily. In terms of assembly, homodimer. Zn(2+) serves as cofactor.

It is found in the cytoplasm. The enzyme catalyses a primary alcohol + NAD(+) = an aldehyde + NADH + H(+). The catalysed reaction is a secondary alcohol + NAD(+) = a ketone + NADH + H(+). It carries out the reaction S-(hydroxymethyl)glutathione + NADP(+) = S-formylglutathione + NADPH + H(+). It catalyses the reaction S-(hydroxymethyl)glutathione + NAD(+) = S-formylglutathione + NADH + H(+). The enzyme catalyses S-nitrosoglutathione + NADH + H(+) = S-(hydroxysulfenamide)glutathione + NAD(+). Functionally, class-III ADH is remarkably ineffective in oxidizing ethanol, but it readily catalyzes the oxidation of long-chain primary alcohols and the oxidation of S-(hydroxymethyl) glutathione. Also acts as a S-nitroso-glutathione reductase by catalyzing the NADH-dependent reduction of S-nitrosoglutathione, thereby regulating protein S-nitrosylation. The polypeptide is Alcohol dehydrogenase class-3 (Saara hardwickii (Indian spiny-tailed lizard)).